The sequence spans 247 residues: Mitochondrial inner membrane protease ATP23 (247 aa).

Residues M1–S21 are disordered. Residue H144 coordinates a divalent metal cation. E145 is a catalytic residue. Residue H148 participates in a divalent metal cation binding.

The protein belongs to the peptidase M76 family.

It localises to the mitochondrion inner membrane. In terms of biological role, has a dual role in the assembly of mitochondrial ATPase. Acts as a protease that removes N-terminal residues of mitochondrial ATPase CF(0) subunit 6 at the intermembrane space side. Also involved in the correct assembly of the membrane-embedded ATPase CF(0) particle, probably mediating association of subunit 6 with the subunit 9 ring. In Kluyveromyces lactis (strain ATCC 8585 / CBS 2359 / DSM 70799 / NBRC 1267 / NRRL Y-1140 / WM37) (Yeast), this protein is Mitochondrial inner membrane protease ATP23 (ATP23).